The following is an 871-amino-acid chain: Translation initiation factor IF-2 (871 aa).

2 disordered regions span residues 60–101 and 184–203; these read KKNI…QEVK and ESLK…KKES. The span at 61–72 shows a compositional bias: basic residues; the sequence is KNIKTPTAKKPK. Residues 73–101 show a composition bias toward basic and acidic residues; the sequence is KENIKEQEKLNESEKKEPKKEEKLKQEVK. Residues 370–537 form the tr-type G domain; sequence TRAPVITIMG…IVLLQADILE (168 aa). The G1 stretch occupies residues 379–386; it reads GHVDHGKT. GTP is bound at residue 379–386; sequence GHVDHGKT. Residues 404–408 are G2; that stretch reads GITQH. The interval 425–428 is G3; it reads DTPG. GTP is bound by residues 425 to 429 and 479 to 482; these read DTPGH and NKMD. Residues 479 to 482 are G4; it reads NKMD. A G5 region spans residues 515–517; the sequence is SAK.

The protein belongs to the TRAFAC class translation factor GTPase superfamily. Classic translation factor GTPase family. IF-2 subfamily.

The protein resides in the cytoplasm. One of the essential components for the initiation of protein synthesis. Protects formylmethionyl-tRNA from spontaneous hydrolysis and promotes its binding to the 30S ribosomal subunits. Also involved in the hydrolysis of GTP during the formation of the 70S ribosomal complex. This chain is Translation initiation factor IF-2, found in Campylobacter jejuni subsp. jejuni serotype O:6 (strain 81116 / NCTC 11828).